Here is a 540-residue protein sequence, read N- to C-terminus: DNA-(apurinic or apyrimidinic site) endonuclease (540 aa).

Positions 206 and 239 each coordinate Mg(2+). The interval 256–276 is disordered; that stretch reads NNKVYGGKKNEGEERNRGSVK. Residues 263-276 are compositionally biased toward basic and acidic residues; sequence KKNEGEERNRGSVK. Mg(2+)-binding residues include Asp400, Asn402, Asp530, and His531. The active-site Proton acceptor is the His531.

Belongs to the DNA repair enzymes AP/ExoA family. Mg(2+) serves as cofactor. Mn(2+) is required as a cofactor. In terms of processing, may be proteolytically cleaved.

Its subcellular location is the mitochondrion. The enzyme catalyses Exonucleolytic cleavage in the 3'- to 5'-direction to yield nucleoside 5'-phosphates.. Its function is as follows. Multifunctional protein that plays a central role in mitochondrial DNA base excision repair pathway induced by oxidative stress. Has apurinic/apyrimidinic (AP) endonuclease activity towards double-stranded DNA (dsDNA). Has nucleotide incision repair (NIR) activity; acts on dsDNA with oxidized bases thymine glycol and 5,6-dihydro-2'-deoxyuridine. Has 3'-5' exonuclease; can use dsDNA templates with 3'-OH termini including blunt-end, gapped and mismatched 3'-recessed. Has 3'-phosphatase activity; cleaves 3'-phosphate from blunt, recessed and gapped dsDNA templates, followed by 3'-5' exonuclease activity. Has RNase H-like activity; cleaves RNA on 3'-recessed RNA-DNA duplex. Plays a role in merosome infection of host erythrocytes. This is DNA-(apurinic or apyrimidinic site) endonuclease from Plasmodium berghei (strain Anka).